The following is a 482-amino-acid chain: ATP-dependent RNA helicase DBP5 (482 aa).

Residues 1–62 (MSDTKRDPAD…KVEEKKTKQE (62 aa)) are disordered. Positions 17-62 (IDNEKEDTSEVSTKETVKSQPEKTADSIKPAEKLVPKVEEKKTKQE) are enriched in basic and acidic residues. 2 positions are modified to phosphoserine: S86 and S93. Positions 92-120 (KSFDELGLAPELLKGIYAMKFQKPSKIQE) match the Q motif motif. One can recognise a Helicase ATP-binding domain in the interval 125–292 (LLLHNPPRNM…KKIVPNANTL (168 aa)). 138–145 (SQSGTGKT) lines the ATP pocket. A Phosphoserine modification is found at S162. The short motif at 239-242 (DEAD) is the DEAD box element. Positions 303–480 (AIKQLYMDCK…EVEKIVKKVL (178 aa)) constitute a Helicase C-terminal domain.

Belongs to the DEAD box helicase family. DDX19/DBP5 subfamily. In terms of assembly, associates with the nuclear pore complex. Interacts with NUP159, GLE1, GFD1 and ZDS1. The interaction with NUP159 is necessary for the association to the nuclear pore complex. Also interacts with the TFIIH complex subunits TFB1, TFB2 and RAD3.

It localises to the cytoplasm. Its subcellular location is the nucleus. The protein localises to the nuclear pore complex. The protein resides in the nucleus membrane. It catalyses the reaction ATP + H2O = ADP + phosphate + H(+). ATP-dependent RNA helicase associated with the nuclear pore complex and essential for mRNA export from the nucleus. May participate in a terminal step of mRNA export through the removal of proteins that accompany mRNA through the nucleopore complex. May also be involved in early transcription. The protein is ATP-dependent RNA helicase DBP5 (DBP5) of Saccharomyces cerevisiae (strain YJM789) (Baker's yeast).